The primary structure comprises 452 residues: Cell division protein FtsZ (452 aa).

GTP contacts are provided by residues 24-28, 111-113, glutamate 142, arginine 146, and aspartate 190; these read GAGSN and GTG.

It belongs to the FtsZ family. In terms of assembly, homodimer. Polymerizes to form a dynamic ring structure in a strictly GTP-dependent manner. Interacts directly with several other division proteins.

The protein resides in the cytoplasm. Essential cell division protein that forms a contractile ring structure (Z ring) at the future cell division site. The regulation of the ring assembly controls the timing and the location of cell division. One of the functions of the FtsZ ring is to recruit other cell division proteins to the septum to produce a new cell wall between the dividing cells. Binds GTP and shows GTPase activity. This is Cell division protein FtsZ from Rickettsia prowazekii (strain Madrid E).